The chain runs to 229 residues: 2-C-methyl-D-erythritol 4-phosphate cytidylyltransferase (229 aa).

The protein belongs to the IspD/TarI cytidylyltransferase family. IspD subfamily. Homodimer.

It carries out the reaction 2-C-methyl-D-erythritol 4-phosphate + CTP + H(+) = 4-CDP-2-C-methyl-D-erythritol + diphosphate. The protein operates within isoprenoid biosynthesis; isopentenyl diphosphate biosynthesis via DXP pathway; isopentenyl diphosphate from 1-deoxy-D-xylulose 5-phosphate: step 2/6. Its function is as follows. Catalyzes the formation of 4-diphosphocytidyl-2-C-methyl-D-erythritol from CTP and 2-C-methyl-D-erythritol 4-phosphate (MEP). The protein is 2-C-methyl-D-erythritol 4-phosphate cytidylyltransferase of Wigglesworthia glossinidia brevipalpis.